We begin with the raw amino-acid sequence, 260 residues long: Pectate lyase H (260 aa).

The first 17 residues, 1–17, serve as a signal peptide directing secretion; that stretch reads MFIKNGLLLSLATSVLA.

It belongs to the polysaccharide lyase 3 family. Requires Ca(2+) as cofactor.

The protein localises to the secreted. The enzyme catalyses Eliminative cleavage of (1-&gt;4)-alpha-D-galacturonan to give oligosaccharides with 4-deoxy-alpha-D-galact-4-enuronosyl groups at their non-reducing ends.. Pectinolytic enzyme consist of four classes of enzymes: pectin lyase, polygalacturonase, pectin methylesterase and rhamnogalacturonase. Among pectinolytic enzymes, pectin lyase is the most important in depolymerization of pectin, since it cleaves internal glycosidic bonds of highly methylated pectins. Favors pectate, the anion, over pectin, the methyl ester. The protein is Pectate lyase H (plyH) of Emericella nidulans (strain FGSC A4 / ATCC 38163 / CBS 112.46 / NRRL 194 / M139) (Aspergillus nidulans).